We begin with the raw amino-acid sequence, 23 residues long: Aldehyde dehydrogenase (23 aa).

The protein belongs to the aldehyde dehydrogenase family.

It catalyses the reaction an aldehyde + NAD(+) + H2O = a carboxylate + NADH + 2 H(+). In Moraxella sp. (strain TAE123), this protein is Aldehyde dehydrogenase.